The sequence spans 193 residues: Ion-translocating oxidoreductase complex subunit B (193 aa).

The tract at residues 1 to 26 (MSTMLIAVILLTLLALFFGVLLGFAA) is hydrophobic. Positions 32–90 (EGNPIVDELEAILPQTQCGQCGYPGCRPYAEAIANGDKVNKCPPGGTATMEKLASLMGV) constitute a 4Fe-4S domain. [4Fe-4S] cluster contacts are provided by Cys-49, Cys-52, Cys-57, Cys-73, Cys-114, Cys-117, Cys-120, Cys-124, Cys-144, Cys-147, Cys-150, and Cys-154. 4Fe-4S ferredoxin-type domains are found at residues 105-134 (KVAYIREDECIGCTKCIQACPVDAIIGAGK) and 136-164 (MHTVLTADCTGCDLCVEPCPVDCIDMVPV).

It belongs to the 4Fe4S bacterial-type ferredoxin family. RnfB subfamily. The complex is composed of six subunits: RnfA, RnfB, RnfC, RnfD, RnfE and RnfG. It depends on [4Fe-4S] cluster as a cofactor.

It localises to the cell inner membrane. Its function is as follows. Part of a membrane-bound complex that couples electron transfer with translocation of ions across the membrane. This chain is Ion-translocating oxidoreductase complex subunit B, found in Shewanella oneidensis (strain ATCC 700550 / JCM 31522 / CIP 106686 / LMG 19005 / NCIMB 14063 / MR-1).